The primary structure comprises 334 residues: Ephrin-B1 (334 aa).

The N-terminal stretch at 1–25 is a signal peptide; the sequence is MARPRGGRWLLGVLLALCRLAAPLA. An Ephrin RBD domain is found at 26-160; the sequence is KSLEPVSWSA…TRSMKIVMKV (135 aa). Topologically, residues 26 to 231 are extracellular; that stretch reads KSLEPVSWSA…FLSSKVAVFA (206 aa). 2 disulfide bridges follow: cysteine 60–cysteine 97 and cysteine 85–cysteine 149. Residue asparagine 135 is glycosylated (N-linked (GlcNAc...) asparagine). The tract at residues 175–218 is disordered; the sequence is SRPSKEADNTVKIVTQSPRHKVPTVEEPGKPGSVNQNGQETQGP. Polar residues predominate over residues 207 to 218; it reads SVNQNGQETQGP. Residues 232–252 traverse the membrane as a helical segment; sequence AIGAGCVIFILIIIFLVVLLI. Over 253 to 334 the chain is Cytoplasmic; the sequence is KIRKRHRKHT…QSPANIYYKV (82 aa). A PDZ-binding motif is present at residues 332 to 334; sequence YKV.

This sequence belongs to the ephrin family. In terms of assembly, binds to the receptor tyrosine kinase EPHB2. Interacts with GRIP1 and GRIP2. Post-translationally, inducible phosphorylation of tyrosine residues in the cytoplasmic domain.

The protein resides in the membrane. Functionally, cell surface transmembrane ligand for Eph receptors, a family of receptor tyrosine kinases which are crucial for migration, repulsion and adhesion during neuronal, vascular and epithelial development. Binds promiscuously Eph receptors residing on adjacent cells, leading to contact-dependent bidirectional signaling into neighboring cells. The signaling pathway downstream of the receptor is referred to as forward signaling while the signaling pathway downstream of the ephrin ligand is referred to as reverse signaling. The protein is Ephrin-B1 (EFNB1) of Gallus gallus (Chicken).